The chain runs to 274 residues: Shikimate dehydrogenase (NADP(+)) (274 aa).

Residues 14-16 (SQS) and threonine 61 each bind shikimate. The active-site Proton acceptor is lysine 65. Residues asparagine 86 and aspartate 102 each contribute to the shikimate site. NADP(+) contacts are provided by residues 128 to 132 (GAGGA), 151 to 156 (NRTVEK), and leucine 215. Residue tyrosine 217 coordinates shikimate. NADP(+) is bound at residue glycine 239.

It belongs to the shikimate dehydrogenase family. In terms of assembly, homodimer.

The catalysed reaction is shikimate + NADP(+) = 3-dehydroshikimate + NADPH + H(+). The protein operates within metabolic intermediate biosynthesis; chorismate biosynthesis; chorismate from D-erythrose 4-phosphate and phosphoenolpyruvate: step 4/7. Its function is as follows. Involved in the biosynthesis of the chorismate, which leads to the biosynthesis of aromatic amino acids. Catalyzes the reversible NADPH linked reduction of 3-dehydroshikimate (DHSA) to yield shikimate (SA). The chain is Shikimate dehydrogenase (NADP(+)) from Proteus mirabilis (strain HI4320).